A 969-amino-acid polypeptide reads, in one-letter code: MTESPTTSPATGSGAAAPDSDAPPYRYTAALAGRIEGSWQDTWAKLGTFNVPNPVGSLAPTDGTPVPEDKLFVQDMFPYPSGEGLHVGHPLGYIATDVYARYFRMTGRNVLHALGFDAFGLPAEQYAVQTGTHPRTRTEANVVNFRRQLGRLGLGHDSRRSFSTTDVEFYKWTQWIFLQIYNAWFDPAANKARPIAELVAEFDSGARSLDDGRNWSELSAGERADVIDSHRLVYRADSMVNWCPGLGTVLANEEVTADGRSDRGNFPVFRKRLRQWMMRITAYSDRLLDDLDLLDWPEPVKTMQRNWIGRSTGAKALFAATGADGAALDIEVFTTRPDTLFGATYMVLAPEHELVDELVAPAWPDGTDPRWTYGAATPGEAVAAYRRAIASKSDLERQESKAKTGVFLGSYATNPTNGKPVPIFIADYVLAGYGTGAIMAVPGHDQRDWDFAHEFGLPIVEVIAGGDISEGAYAGDGLLVNSGYLDGLDVAAAKEAITARLEAEGRGCARVEFKLRDWLFARQRYWGEPFPIVYDSDGRPHALDEAALPVELPDVPDYSPVLFDPDDADSEPSPPLAKATDWVHVELDLGDGLKPYSRDTNVMPQWAGSSWYELRYTDPHNSERFCAKENEAYWMGPRPAEHGPQDPGGVDLYVGGAEHAVLHLLYARFWHKVLYDLGHVSSREPYRRLVNQGYIQAFAYTDSRGSYVPAEEVVERDGRFFYRGPDGEIEVFQEFGKIGKSLKNSISPDEICDDYGADTLRVYEMSMGPLEASRPWATKDVVGAHRFLQRVWRLVVDEQTGETRVVDGAGRDLPTGTLRLLHRTIAGVSEDYAGLRNNTAVAKLIEYTNHLTKEHRDAVPRAAVEPLVLMLAPLAPHMAEELWLRLGHTTSLAHGPFPVADPAYLVEDTVEYPVQVNGKVRGRVTVAADADRDTLEAAALADEKVLAFLAGAQPRKVIVVPGRLVNLVV.

A disordered region spans residues 1-23; it reads MTESPTTSPATGSGAAAPDSDAP. Positions 78 to 89 match the 'HIGH' region motif; sequence PYPSGEGLHVGH. Positions 737–741 match the 'KMSKS' region motif; sequence KIGKS. Residue K740 coordinates ATP.

Belongs to the class-I aminoacyl-tRNA synthetase family.

It is found in the cytoplasm. The catalysed reaction is tRNA(Leu) + L-leucine + ATP = L-leucyl-tRNA(Leu) + AMP + diphosphate. This Mycobacterium avium (strain 104) protein is Leucine--tRNA ligase.